A 1194-amino-acid polypeptide reads, in one-letter code: Probable disease resistance protein RPP1 (1194 aa).

Residues 1 to 27 are disordered; it reads MGSVMSLGCSKRKATNQDVDSESRKRR. Residues 96–260 enclose the TIR domain; it reads WKHDVFPSFH…KISTDVSNML (165 aa). 105 to 110 contributes to the NAD(+) binding site; the sequence is HGADVR. Glu-171 is a catalytic residue. The region spanning 280 to 535 is the NB-ARC domain; it reads DMLEQLLRLD…ACLFNGESTT (256 aa). 14 LRR repeats span residues 623-647, 658-681, 690-713, 714-737, 739-760, 761-784, 786-807, 808-831, 832-855, 866-878, 879-899, 900-922, 943-965, and 966-991; these read LSNT…HFVR, QLAL…GYES, PEFL…TKQL, RNLK…STAT, LEEL…IEKL, TSLQ…ENAT, LREL…IGTA, TNLK…IGDI, TDLE…IGNL, CSKL…NINL, KSLD…PEIS, THIS…IMSW, FDII…VKRM, and SRLR…SLDY. The tract at residues 1170 to 1194 is disordered; it reads RRSSSPDLSPESSRVSSYDHCLRGD. Low complexity predominate over residues 1171–1185; the sequence is RSSSPDLSPESSRVS.

This sequence belongs to the disease resistance TIR-NB-LRR family.

It carries out the reaction NAD(+) + H2O = ADP-D-ribose + nicotinamide + H(+). In terms of biological role, TIR-NB-LRR receptor-like protein that confers resistance to the pathogen Hyaloperonospora arabidopsis. Probably acts as a NAD(+) hydrolase (NADase): in response to activation, catalyzes cleavage of NAD(+) into ADP-D-ribose (ADPR) and nicotinamide; NAD(+) cleavage triggering a defense system that promotes cell death. The protein is Probable disease resistance protein RPP1 of Arabidopsis thaliana (Mouse-ear cress).